A 727-amino-acid polypeptide reads, in one-letter code: Putative E3 ubiquitin-protein ligase UNKL (727 aa).

The tract at residues 1 to 21 (MPSVSKAAAAALSGSPPQTEK) is disordered. 4 C3H1-type zinc fingers span residues 75-104 (YSPD…HRTT), 115-145 (YYKT…HGPL), 243-277 (QYRS…HSRT), and 285-313 (IYKS…HTEK). The segment covering 330–339 (STSAYSSQPG) has biased composition (polar residues). Disordered stretches follow at residues 330 to 360 (STSA…DSKQ), 446 to 514 (LTGP…ATLG), and 543 to 562 (SPSP…SPNS). Low complexity predominate over residues 463-495 (SLPRSPSLHSSSSLSTSPLSSLSQSLSGPLVSS). The RING-type zinc-finger motif lies at 686–721 (CVACQERAHGTVLRPCQHRVLCEPCAASTPECPYCK).

Belongs to the unkempt family. Interacts with the GTP-bound form of Rac1. Interacts with Baf60b/Smarcd2. In terms of processing, ubiquitination is enhanced by activated Rac1. The presence of the RING finger domain is not essential for ubiquitination to occur. Ubiquitous.

Its subcellular location is the cytoplasm. The protein localises to the nucleus. Its pathway is protein modification; protein ubiquitination. May participate in a protein complex showing an E3 ligase activity regulated by Rac1. Ubiquitination is directed towards itself and possibly other substrates, such as Baf60b/Smarcd2. Intrinsic E3 ligase activity has not been proven. The chain is Putative E3 ubiquitin-protein ligase UNKL (Unkl) from Mus musculus (Mouse).